The chain runs to 454 residues: Putative F-box/LRR-repeat protein At3g58880 (454 aa).

One can recognise an F-box domain in the interval 2–48 (VDLVSSLPDDLLGHILSLLTTKEAALTSILSKRWRYLIAFVPYLEFD). 7 LRR repeats span residues 77-102 (LALH…DLLN), 144-168 (SGCR…TLDS), 169-194 (VSWS…NLAN), 214-240 (IKSV…NYTA), 270-301 (LVSV…YLSP), 303-327 (TLQV…VIES), and 328-353 (SMDI…VIKG).

The chain is Putative F-box/LRR-repeat protein At3g58880 from Arabidopsis thaliana (Mouse-ear cress).